We begin with the raw amino-acid sequence, 263 residues long: MATPVKKWLLRVAPWFLPVGIVAVWQLASSVGWLSTRILPSPEGVVTAFWTLSASGELWQHLAISSWRALIGFSIGGSLGLILGLISGLSRWGERLLDTSIQMLRNVPHLALIPLVILWFGIDESAKIFLVALGTLFPIYINTWHGIRNIDRGLVEMARSYGLSGIPLFIHVILPGALPSIMVGVRFALGLMWLTLIVAETISANSGIGYLAMNAREFLQTDVVVVAIILYALLGKLADVSAQLLERLWLRWNPAYHLKEATV.

Topologically, residues 1–13 (MATPVKKWLLRVA) are cytoplasmic. A helical transmembrane segment spans residues 14-34 (PWFLPVGIVAVWQLASSVGWL). Topologically, residues 35 to 43 (STRILPSPE) are periplasmic. The helical transmembrane segment at 44–64 (GVVTAFWTLSASGELWQHLAI) threads the bilayer. An ABC transmembrane type-1 domain is found at 58–242 (LWQHLAISSW…LLGKLADVSA (185 aa)). Residues 65-68 (SSWR) lie on the Cytoplasmic side of the membrane. A helical membrane pass occupies residues 69-89 (ALIGFSIGGSLGLILGLISGL). The Periplasmic segment spans residues 90 to 102 (SRWGERLLDTSIQ). The helical transmembrane segment at 103–122 (MLRNVPHLALIPLVILWFGI) threads the bilayer. Residues 123–125 (DES) lie on the Cytoplasmic side of the membrane. A helical membrane pass occupies residues 126-148 (AKIFLVALGTLFPIYINTWHGIR). Residues 149–164 (NIDRGLVEMARSYGLS) are Periplasmic-facing. The chain crosses the membrane as a helical span at residues 165-185 (GIPLFIHVILPGALPSIMVGV). At 186–187 (RF) the chain is on the cytoplasmic side. The chain crosses the membrane as a helical span at residues 188–208 (ALGLMWLTLIVAETISANSGI). Topologically, residues 209–217 (GYLAMNARE) are periplasmic. A helical transmembrane segment spans residues 218-238 (FLQTDVVVVAIILYALLGKLA). The Cytoplasmic portion of the chain corresponds to 239–263 (DVSAQLLERLWLRWNPAYHLKEATV).

The protein belongs to the binding-protein-dependent transport system permease family. CysTW subfamily.

It localises to the cell inner membrane. Its function is as follows. Part of a binding-protein-dependent transport system for aliphatic sulfonates. Probably responsible for the translocation of the substrate across the membrane. The chain is Putative aliphatic sulfonates transport permease protein SsuC (ssuC) from Escherichia coli (strain K12).